The chain runs to 914 residues: MAKTLKDLQGWEIITTDEQGNIIDGGQKRLRRRGAKTEHYLKRSSDGIKLGRGDSVVMHNEAAGTYSVYMIQELRLNTLNNVVELWALTYLRWFEVNPLAHYRQFNPDANILNRPLNYYNKLFSETANKNELYLTAELAELQLFNFIRVANVMDGSKWEVLKGNVDPERDFTVRYICEPTGEKFVDINIEDVKAYIKKVEPREAQEYLKDLTLPSKKKEIKRGPQKKDKATQTAQISDAETRATDITDNEDGNEDESSDYESPSDIDVSEDMDSGEISADELEEEEDEEEDEDEEEKEARHTNSPRKRGRKIKLGKDDIDASVQPPPKKRGRKPKDPSKPRQMLLISSCRANNTPVIRKFTKKNVARAKKKYTPFSKRFKSIAAIPDLTSLPEFYGNSSELMASRFENKLKTTQKHQIVETIFSKVKKQLNSSYVKEEILKSANFQDYLPARENEFASIYLSAYSAIESDSATTIYVAGTPGVGKTLTVREVVKELLSSSAQREIPDFLYVEINGLKMVKPTDCYETLWNKVSGERLTWAASMESLEFYFKRVPKNKKKTIVVLLDELDAMVTKSQDIMYNFFNWTTYENAKLIVIAVANTMDLPERQLGNKITSRIGFTRIMFTGYTHEELKNIIDLRLKGLNDSFFYVDTKTGNAILIDAAGNDTTVKQTLPEDVRKVRLRMSADAIEIASRKVASVSGDARRALKVCKRAAEIAEKHYMAKHGYGYDGKTVIEDENEEQIYDDEDKDLIESNKAKDDNDDDDDNDGVQTVHITHVMKALNETLNSHVITFMTRLSFTAKLFIYALLNLMKKNGSQEQELGDIVDEIKLLIEVNGSNKFVMEIAKTLFQQGSDNISEQLRIISWDFVLNQLLDAGILFKQTMKNDRICCVKLNISVEEAKRAMNEDETLRNL.

In terms of domain architecture, BAH spans 48–188 (IKLGRGDSVV…PTGEKFVDIN (141 aa)). Residues 218-343 (KEIKRGPQKK…PKDPSKPRQM (126 aa)) form a disordered region. Residues 221–230 (KRGPQKKDKA) show a composition bias toward basic and acidic residues. Ser237 is subject to Phosphoserine. The segment covering 247–296 (TDNEDGNEDESSDYESPSDIDVSEDMDSGEISADELEEEEDEEEDEDEEE) has biased composition (acidic residues). The span at 303-313 (NSPRKRGRKIK) shows a compositional bias: basic residues. ATP contacts are provided by residues Val435 and 479–487 (GTPGVGKTL). Mg(2+)-binding residues include Asp566 and Glu567. ATP-binding positions include Glu567, Asn600, Arg704, and 726–733 (GYGYDGKT).

Belongs to the ORC1 family. In terms of assembly, component of the origin recognition complex (ORC) composed of at least ORC1, ORC2, ORC3, ORC4, ORC5 and ORC6. Interacts with MCM10 and TAH11.

It is found in the nucleus. Functionally, component of the origin recognition complex (ORC) that binds origins of replication. It has a role in both chromosomal replication and mating type transcriptional silencing. Binds to the ARS consensus sequence (ACS) of origins of replication. The polypeptide is Origin recognition complex subunit 1 (ORC1) (Saccharomyces cerevisiae (strain ATCC 204508 / S288c) (Baker's yeast)).